The following is a 308-amino-acid chain: MRQINQTQVTEFLLLGLSDGPHTEQLLFIVLLGVYLVTVLGNLLLISLVHVDSQLHTPMYFFLCNLSLADLCFSTNIVPQALVHLLSRKKVIAFTLCAARLLFFLIFGCTQCALLAVMSYDRYVAICNPLRYPNIMTWKVCVQLATGSWTSGILVSVVDTTFILRLPYRGSNSIAHFFCEAPALLILASTDTHASEMAIFLMGVVILLIPVFLILVSYGRIIVTVVKMKSTVGSLKAFSTCGSHLMVVILFYGSAIITYMTPKSSKQQEKSVSVFYAIVTPMLNPLIYSLRNKDVKAALRKVATRNFP.

The Extracellular portion of the chain corresponds to Met-1 to Gln-25. Asn-5 is a glycosylation site (N-linked (GlcNAc...) asparagine). Residues Leu-26–Val-49 traverse the membrane as a helical segment. At His-50–Thr-57 the chain is on the cytoplasmic side. The helical transmembrane segment at Pro-58–Pro-79 threads the bilayer. At Gln-80 to Arg-100 the chain is on the extracellular side. The chain crosses the membrane as a helical span at residues Leu-101–Tyr-120. The Cytoplasmic segment spans residues Asp-121 to Lys-139. A helical membrane pass occupies residues Val-140 to Val-158. Over Asp-159–Ser-195 the chain is Extracellular. Residues Glu-196–Gly-219 traverse the membrane as a helical segment. Residues Arg-220–Lys-236 lie on the Cytoplasmic side of the membrane. The chain crosses the membrane as a helical span at residues Ala-237–Tyr-259. Topologically, residues Met-260–Lys-270 are extracellular. A helical membrane pass occupies residues Ser-271–Leu-290. The Cytoplasmic segment spans residues Arg-291–Pro-308.

This sequence belongs to the G-protein coupled receptor 1 family.

It is found in the cell membrane. Its function is as follows. Odorant receptor. This is Olfactory receptor 2D2 (OR2D2) from Homo sapiens (Human).